A 446-amino-acid polypeptide reads, in one-letter code: Coiled-coil domain-containing protein 112 (446 aa).

Coiled-coil stretches lie at residues 23–116 and 219–400; these read LEEL…RKID and ERKK…NVSR. 2 disordered regions span residues 247 to 277 and 394 to 430; these read NNTPMLFHNKPEDNQKQKEEQRKKQKLAVEA and VENNVSRDPSRLYKPTKGWEERTKKIGPTGSGPLLHI. Residues 255-268 show a composition bias toward basic and acidic residues; sequence NKPEDNQKQKEEQR.

It localises to the cytoplasm. It is found in the cytoskeleton. Its subcellular location is the microtubule organizing center. The protein resides in the centrosome. The protein localises to the centriolar satellite. The protein is Coiled-coil domain-containing protein 112 (CCDC112) of Macaca fascicularis (Crab-eating macaque).